Here is a 159-residue protein sequence, read N- to C-terminus: ATP synthase subunit b 2 (159 aa).

Residues 1–21 traverse the membrane as a helical segment; that stretch reads MDATFWAFIALVIFVAIVVYM.

The protein belongs to the ATPase B chain family. As to quaternary structure, F-type ATPases have 2 components, F(1) - the catalytic core - and F(0) - the membrane proton channel. F(1) has five subunits: alpha(3), beta(3), gamma(1), delta(1), epsilon(1). F(0) has three main subunits: a(1), b(2) and c(10-14). The alpha and beta chains form an alternating ring which encloses part of the gamma chain. F(1) is attached to F(0) by a central stalk formed by the gamma and epsilon chains, while a peripheral stalk is formed by the delta and b chains.

Its subcellular location is the cell inner membrane. F(1)F(0) ATP synthase produces ATP from ADP in the presence of a proton or sodium gradient. F-type ATPases consist of two structural domains, F(1) containing the extramembraneous catalytic core and F(0) containing the membrane proton channel, linked together by a central stalk and a peripheral stalk. During catalysis, ATP synthesis in the catalytic domain of F(1) is coupled via a rotary mechanism of the central stalk subunits to proton translocation. Its function is as follows. Component of the F(0) channel, it forms part of the peripheral stalk, linking F(1) to F(0). This Brucella ovis (strain ATCC 25840 / 63/290 / NCTC 10512) protein is ATP synthase subunit b 2.